We begin with the raw amino-acid sequence, 344 residues long: Phenylalanine--tRNA ligase alpha subunit (344 aa).

E256 provides a ligand contact to Mg(2+).

Belongs to the class-II aminoacyl-tRNA synthetase family. Phe-tRNA synthetase alpha subunit type 1 subfamily. In terms of assembly, tetramer of two alpha and two beta subunits. Requires Mg(2+) as cofactor.

The protein localises to the cytoplasm. The enzyme catalyses tRNA(Phe) + L-phenylalanine + ATP = L-phenylalanyl-tRNA(Phe) + AMP + diphosphate + H(+). The sequence is that of Phenylalanine--tRNA ligase alpha subunit from Geobacillus kaustophilus (strain HTA426).